Reading from the N-terminus, the 137-residue chain is MLKEFKEFALKGNMIDLAIGVIIGGAFGGLVNSIVNDILMPIIGFITGGIDFSNMFIQLAGEKQATLSAAKTAGATISYGNFITLLINFLIIAWVLFLFVKGMNKIRRKQEKEESSKKMSLEEQLLSEIRDLLAKKK.

3 helical membrane-spanning segments follow: residues isoleucine 15–valine 35, isoleucine 38–glutamine 58, and glycine 80–valine 100.

Belongs to the MscL family. As to quaternary structure, homopentamer.

It localises to the cell inner membrane. Functionally, channel that opens in response to stretch forces in the membrane lipid bilayer. May participate in the regulation of osmotic pressure changes within the cell. The polypeptide is Large-conductance mechanosensitive channel (Bartonella quintana (strain Toulouse) (Rochalimaea quintana)).